A 170-amino-acid chain; its full sequence is MNLPLLATEGFGLNLNLFETNVLNWAVVVFGLYKFLPSFLGKMLQKRREGILLELKDAEDRLLKATQALEKAKTDLSLAEEKASQIKADSLKRSESIRMESEKKAIEEMARIKQSAISDESSEASRAISQLRKEAVELAIKKALDSLPNRLDQTTQENLVTQSINNIEMN.

The chain crosses the membrane as a helical span at residues 15–37 (LNLFETNVLNWAVVVFGLYKFLP).

It belongs to the ATPase B chain family. In terms of assembly, F-type ATPases have 2 components, F(1) - the catalytic core - and F(0) - the membrane proton channel. F(1) has five subunits: alpha(3), beta(3), gamma(1), delta(1), epsilon(1). F(0) has four main subunits: a(1), b(1), b'(1) and c(10-14). The alpha and beta chains form an alternating ring which encloses part of the gamma chain. F(1) is attached to F(0) by a central stalk formed by the gamma and epsilon chains, while a peripheral stalk is formed by the delta, b and b' chains.

The protein resides in the cellular thylakoid membrane. F(1)F(0) ATP synthase produces ATP from ADP in the presence of a proton or sodium gradient. F-type ATPases consist of two structural domains, F(1) containing the extramembraneous catalytic core and F(0) containing the membrane proton channel, linked together by a central stalk and a peripheral stalk. During catalysis, ATP synthesis in the catalytic domain of F(1) is coupled via a rotary mechanism of the central stalk subunits to proton translocation. In terms of biological role, component of the F(0) channel, it forms part of the peripheral stalk, linking F(1) to F(0). This chain is ATP synthase subunit b, found in Prochlorococcus marinus (strain MIT 9515).